The primary structure comprises 207 residues: Large ribosomal subunit protein uL4 (207 aa).

The segment at 49–78 (HAVKNRSAVSGGGRKPWRQKGTGRARQGSI) is disordered.

It belongs to the universal ribosomal protein uL4 family. As to quaternary structure, part of the 50S ribosomal subunit.

One of the primary rRNA binding proteins, this protein initially binds near the 5'-end of the 23S rRNA. It is important during the early stages of 50S assembly. It makes multiple contacts with different domains of the 23S rRNA in the assembled 50S subunit and ribosome. Functionally, forms part of the polypeptide exit tunnel. In Streptococcus pyogenes serotype M49 (strain NZ131), this protein is Large ribosomal subunit protein uL4.